The primary structure comprises 559 residues: AP-4 complex accessory subunit tepsin (559 aa).

The region spanning 2–135 (LDRLAFLQQL…FSESIPSPSH (134 aa)) is the ENTH domain. Disordered regions lie at residues 131 to 157 (PSPS…APAL), 214 to 290 (AIPS…ESLD), and 472 to 491 (PNGA…SDPA). Low complexity-rich tracts occupy residues 144-154 (QSGMGSQASSA) and 266-281 (SRSS…DGQS). A compositionally biased stretch (polar residues) spans 472–485 (PNGAANQKNPNGST).

It localises to the golgi apparatus. It is found in the trans-Golgi network membrane. Its subcellular location is the cytoplasmic vesicle. The protein localises to the cytoplasm. The protein resides in the cytosol. Its function is as follows. May play a role in vesicular trafficking of proteins at the trans-Golgi network. This Xenopus laevis (African clawed frog) protein is AP-4 complex accessory subunit tepsin.